We begin with the raw amino-acid sequence, 151 residues long: Deoxyuridine 5'-triphosphate nucleotidohydrolase (151 aa).

Residues 70–72 (RSG), Asn-83, 87–89 (LID), and Met-97 each bind substrate.

It belongs to the dUTPase family. Mg(2+) is required as a cofactor.

It carries out the reaction dUTP + H2O = dUMP + diphosphate + H(+). Its pathway is pyrimidine metabolism; dUMP biosynthesis; dUMP from dCTP (dUTP route): step 2/2. Its function is as follows. This enzyme is involved in nucleotide metabolism: it produces dUMP, the immediate precursor of thymidine nucleotides and it decreases the intracellular concentration of dUTP so that uracil cannot be incorporated into DNA. This chain is Deoxyuridine 5'-triphosphate nucleotidohydrolase, found in Yersinia enterocolitica serotype O:8 / biotype 1B (strain NCTC 13174 / 8081).